The chain runs to 449 residues: tRNA-2-methylthio-N(6)-dimethylallyladenosine synthase (449 aa).

The MTTase N-terminal domain maps to 4 to 119 (RTFHIETFGC…APQALDRLVE (116 aa)). [4Fe-4S] cluster contacts are provided by C13, C48, C82, C158, C162, and C165. A Radical SAM core domain is found at 144-375 (GAVPASVFVN…QTLQNRLTER (232 aa)). In terms of domain architecture, TRAM spans 378 to 446 (QDMVGKKVEV…KHSLLAEQAG (69 aa)).

This sequence belongs to the methylthiotransferase family. MiaB subfamily. In terms of assembly, monomer. [4Fe-4S] cluster is required as a cofactor.

The protein localises to the cytoplasm. It carries out the reaction N(6)-dimethylallyladenosine(37) in tRNA + (sulfur carrier)-SH + AH2 + 2 S-adenosyl-L-methionine = 2-methylsulfanyl-N(6)-dimethylallyladenosine(37) in tRNA + (sulfur carrier)-H + 5'-deoxyadenosine + L-methionine + A + S-adenosyl-L-homocysteine + 2 H(+). Catalyzes the methylthiolation of N6-(dimethylallyl)adenosine (i(6)A), leading to the formation of 2-methylthio-N6-(dimethylallyl)adenosine (ms(2)i(6)A) at position 37 in tRNAs that read codons beginning with uridine. In Nitratidesulfovibrio vulgaris (strain DP4) (Desulfovibrio vulgaris), this protein is tRNA-2-methylthio-N(6)-dimethylallyladenosine synthase.